A 269-amino-acid polypeptide reads, in one-letter code: 2-dehydro-3-deoxyphosphooctonate aldolase (269 aa).

The protein belongs to the KdsA family.

It localises to the cytoplasm. The catalysed reaction is D-arabinose 5-phosphate + phosphoenolpyruvate + H2O = 3-deoxy-alpha-D-manno-2-octulosonate-8-phosphate + phosphate. The protein operates within carbohydrate biosynthesis; 3-deoxy-D-manno-octulosonate biosynthesis; 3-deoxy-D-manno-octulosonate from D-ribulose 5-phosphate: step 2/3. It functions in the pathway bacterial outer membrane biogenesis; lipopolysaccharide biosynthesis. This is 2-dehydro-3-deoxyphosphooctonate aldolase from Chlamydia felis (strain Fe/C-56) (Chlamydophila felis).